Reading from the N-terminus, the 252-residue chain is Ribosome assembly factor mrt4 (252 aa).

This sequence belongs to the universal ribosomal protein uL10 family. As to quaternary structure, associates with the pre-60S ribosomal particle.

It is found in the nucleus. It localises to the nucleolus. The protein localises to the cytoplasm. Component of the ribosome assembly machinery. Nuclear paralog of the ribosomal protein P0, it binds pre-60S subunits at an early stage of assembly in the nucleolus, and is replaced by P0 in cytoplasmic pre-60S subunits and mature 80S ribosomes. The polypeptide is Ribosome assembly factor mrt4 (Neurospora crassa (strain ATCC 24698 / 74-OR23-1A / CBS 708.71 / DSM 1257 / FGSC 987)).